A 368-amino-acid polypeptide reads, in one-letter code: Glutaminyl-peptide cyclotransferase (368 aa).

The N-terminal stretch at Met1–Gly33 is a signal peptide. Residue Asn53 is glycosylated (N-linked (GlcNAc...) asparagine). Cys143 and Cys169 are joined by a disulfide. Asp164 is a binding site for Zn(2+). Residue Glu207 is the Proton acceptor of the active site. Position 208 (Glu208) interacts with Zn(2+). The active-site Proton acceptor is Asp254. Residue Asn292 is glycosylated (N-linked (GlcNAc...) asparagine). His336 contributes to the Zn(2+) binding site. An N-linked (GlcNAc...) asparagine glycan is attached at Asn352.

It belongs to the glutaminyl-peptide cyclotransferase family. Expressed by the venom gland.

Its subcellular location is the secreted. The catalysed reaction is N-terminal L-glutaminyl-[peptide] = N-terminal 5-oxo-L-prolyl-[peptide] + NH4(+). Responsible for the biosynthesis of pyroglutamyl peptides. Has a bias against acidic and tryptophan residues adjacent to the N-terminal glutaminyl residue and a lack of importance of chain length after the second residue. Also catalyzes N-terminal pyroglutamate formation. This chain is Glutaminyl-peptide cyclotransferase (QPCT), found in Gloydius blomhoffii (Mamushi).